We begin with the raw amino-acid sequence, 288 residues long: uncharacterized protein (288 aa).

To M.bovis Mb1522c, M.leprae ML1804 and M.avium MAV321.

This is an uncharacterized protein from Mycobacterium tuberculosis (strain ATCC 25618 / H37Rv).